The primary structure comprises 330 residues: MVKIFYDKDVTFDAVKDKTIAVIGYGSQGRAQALNMKDSGLNVIVGLRPNGASWNKAIKDGHKVMTIEEAAEKADIIHILIPDEVQPAVYKKQIEPYLTEGKTISFSHGYNIHYGFIRPPENVNITMVAPKSPGAMVRKTYEEGFGVPGLVAVERDYTGDALQIALGMAKGIGLTKVGVIQTTFREETETDLFGEQVVLCGGVTELIKAAFETLVEAGYAPEMAYFETCHELKLIVDLIYQKGLQGMWENVSNTAEYGGLTRRARVINEESRKAMKEILKEIQDGRFAKEWSLEREAGFPHLNALRRLEKEHLIEKVGKELRKMCGLEKE.

One can recognise a KARI N-terminal Rossmann domain in the interval 2–182; it reads VKIFYDKDVT…GLTKVGVIQT (181 aa). NADP(+) is bound by residues 25 to 28, Arg48, Ser53, and 83 to 86; these read YGSQ and DEVQ. Residue His108 is part of the active site. NADP(+) is bound at residue Gly134. One can recognise a KARI C-terminal knotted domain in the interval 183–328; it reads TFREETETDL…KELRKMCGLE (146 aa). Mg(2+)-binding residues include Asp191, Glu195, Glu227, and Glu231. Ser252 contacts substrate.

It belongs to the ketol-acid reductoisomerase family. It depends on Mg(2+) as a cofactor.

The catalysed reaction is (2R)-2,3-dihydroxy-3-methylbutanoate + NADP(+) = (2S)-2-acetolactate + NADPH + H(+). It carries out the reaction (2R,3R)-2,3-dihydroxy-3-methylpentanoate + NADP(+) = (S)-2-ethyl-2-hydroxy-3-oxobutanoate + NADPH + H(+). It functions in the pathway amino-acid biosynthesis; L-isoleucine biosynthesis; L-isoleucine from 2-oxobutanoate: step 2/4. Its pathway is amino-acid biosynthesis; L-valine biosynthesis; L-valine from pyruvate: step 2/4. Functionally, involved in the biosynthesis of branched-chain amino acids (BCAA). Catalyzes an alkyl-migration followed by a ketol-acid reduction of (S)-2-acetolactate (S2AL) to yield (R)-2,3-dihydroxy-isovalerate. In the isomerase reaction, S2AL is rearranged via a Mg-dependent methyl migration to produce 3-hydroxy-3-methyl-2-ketobutyrate (HMKB). In the reductase reaction, this 2-ketoacid undergoes a metal-dependent reduction by NADPH to yield (R)-2,3-dihydroxy-isovalerate. The chain is Ketol-acid reductoisomerase (NADP(+)) from Methanocaldococcus jannaschii (strain ATCC 43067 / DSM 2661 / JAL-1 / JCM 10045 / NBRC 100440) (Methanococcus jannaschii).